Here is a 335-residue protein sequence, read N- to C-terminus: Abasic site processing protein HMCES (335 aa).

Cys2 acts as the Nucleophile in catalysis. Thiazolidine linkage to a ring-opened DNA abasic site is present on Cys2. Residues 24-39 (QGGRKWPNWRDGDSDK) are compositionally biased toward basic and acidic residues. A disordered region spans residues 24–51 (QGGRKWPNWRDGDSDKYQPSYNKSPQSN). Over residues 40–51 (YQPSYNKSPQSN) the composition is skewed to polar residues. Glu129 is a catalytic residue. The tract at residues 284–335 (LQNKSPKKEESHSIQSPKLSQFGAPPKKTSAGLMQQWLKKEDGEPSPKRAKK) is disordered. Basic and acidic residues predominate over residues 321 to 335 (LKKEDGEPSPKRAKK).

The protein belongs to the SOS response-associated peptidase family. Post-translationally, ubiquitination of the hmces DNA-protein cross-link by rfwd3 may promotes its degradation.

Its subcellular location is the chromosome. With respect to regulation, formation and reversal of DNA-protein cross-link depends on DNA context. Catalyzes formation of the thiazolidine linkage in presence of abasic sites in single-stranded DNA. Mediates the reversal of the thiazolidine cross-link in presence of double stranded DNA. In terms of biological role, sensor of abasic sites in single-stranded DNA (ssDNA) required to preserve genome integrity by promoting error-free repair of abasic sites. Acts as an enzyme that recognizes and binds abasic sites in ssDNA at replication forks and chemically modifies the lesion by forming a covalent cross-link with DNA: forms a stable thiazolidine linkage between a ring-opened abasic site and the alpha-amino and sulfhydryl substituents of its N-terminal catalytic cysteine residue. The hmces DNA-protein cross-link is then either reversed or degraded. Hmces is able to catalyze the reversal of its thiazolidine cross-link and cycle between a cross-link and a non-cross-linked state depending on DNA context: mediates self-reversal of the thiazolidine cross-link in double stranded DNA, allowing apex1 to initiate downstream repair of abasic sites. The hmces DNA-protein cross-link can also be degraded by the sprtn metalloprotease following unfolding by the brip1/fancj helicase. Promotes error-free repair of abasic sites by protecting abasic sites from translesion synthesis (TLS) polymerases and endonucleases that are error-prone and would generate mutations and double-strand breaks. Acts as a protease: mediates autocatalytic processing of its N-terminal methionine in order to expose the catalytic cysteine. The hmces DNA-protein cross-link is then either reversed or degraded. According to a model, the HMCES DNA-protein cross-link. The protein is Abasic site processing protein HMCES of Xenopus tropicalis (Western clawed frog).